The following is a 477-amino-acid chain: Phosphomethylpyrimidine synthase (477 aa).

Residues N67, M96, Y125, H160, 180–182 (SRG), 221–224 (DGLR), and E260 contribute to the substrate site. Residue H264 participates in Zn(2+) binding. Residue Y287 participates in substrate binding. H328 provides a ligand contact to Zn(2+). [4Fe-4S] cluster contacts are provided by C408, C411, and C416. Residues 427–440 (AGDGMDGLESRTDL) show a composition bias toward basic and acidic residues. The tract at residues 427–477 (AGDGMDGLESRTDLDSSAAAAVNRPPTGVHRAEKLDDIPCPVAEDDVAADD) is disordered.

This sequence belongs to the ThiC family. [4Fe-4S] cluster is required as a cofactor.

The catalysed reaction is 5-amino-1-(5-phospho-beta-D-ribosyl)imidazole + S-adenosyl-L-methionine = 4-amino-2-methyl-5-(phosphooxymethyl)pyrimidine + CO + 5'-deoxyadenosine + formate + L-methionine + 3 H(+). Its pathway is cofactor biosynthesis; thiamine diphosphate biosynthesis. Catalyzes the synthesis of the hydroxymethylpyrimidine phosphate (HMP-P) moiety of thiamine from aminoimidazole ribotide (AIR) in a radical S-adenosyl-L-methionine (SAM)-dependent reaction. This Natronomonas pharaonis (strain ATCC 35678 / DSM 2160 / CIP 103997 / JCM 8858 / NBRC 14720 / NCIMB 2260 / Gabara) (Halobacterium pharaonis) protein is Phosphomethylpyrimidine synthase.